The primary structure comprises 1205 residues: Solute carrier family 12 member 2 (1205 aa).

M1 is subject to N-acetylmethionine. Positions 1-22 (MEPGPARPRLAPAARPGWGRAA) are enriched in low complexity. Residues 1-102 (MEPGPARPRL…AAAAAAAAAA (102 aa)) are disordered. Over 1–279 (MEPGPARPRL…AESKGVVKFG (279 aa)) the chain is Cytoplasmic. Residues 23-35 (GCRRRGGPARHGR) are compositionally biased toward basic residues. A phosphoserine mark is found at S74 and S76. The RFXV motif 1 motif lies at 77 to 80 (RFQV). A compositionally biased stretch (low complexity) spans 87-102 (AGRAAAAAAAAAAAAA). The RFXV motif 2 motif lies at 133–136 (RFRV). A compositionally biased stretch (low complexity) spans 143–155 (ASSSADDSLSDAA). Residues 143-187 (ASSSADDSLSDAAGVGGDGPNVSFQNGGDTVLSEGSSLHSGGGSG) form a disordered region. A phosphothreonine mark is found at T196, T200, T205, T210, and T223. At S235 the chain carries Phosphoserine. Position 259 is a phosphothreonine (T259). A discontinuously helical transmembrane segment spans residues 280–309 (WIKGVLVRCMLNIWGVMLFIRLSWIVGQAG). L290 serves as a coordination point for Na(+). K(+) contacts are provided by N291 and I292. Residue W293 coordinates Na(+). Residues G294, V295, and M296 each contribute to the chloride site. Residues 310–329 (IGLSVVVIAMATVVTTITGL) traverse the membrane as a helical segment. Over 330 to 360 (STSAIATNGFVRGGGAYYLISRSLGPEFGGA) the chain is Cytoplasmic. Residues 361 to 388 (IGLIFAFANAVAVAMYVVGFAETVVELL) traverse the membrane as a helical segment. F365 serves as a coordination point for chloride. K(+) is bound at residue Y376. Residues 389-398 (KEHSILMIDE) are Extracellular-facing. A helical transmembrane segment spans residues 399–422 (INDIRIIGAITVVILLGISVAGME). Over 423-425 (WEA) the chain is Cytoplasmic. Residues 426–447 (KAQIVLLVILLLAIADFVIGTF) traverse the membrane as a helical segment. The Extracellular portion of the chain corresponds to 448-479 (ISLESKKPKGFFGYKSEIFNENFGPDFREEET). Residues 480-497 (FFSVFAIFFPAATGILAG) traverse the membrane as a discontinuously helical segment. K(+) is bound by residues P489, A490, and T492. 2 residues coordinate chloride: P489 and A490. Chloride is bound by residues G493 and I494. Topologically, residues 498 to 512 (ANISGDLADPQSAIP) are cytoplasmic. A helical membrane pass occupies residues 513–534 (KGTLLAILITTVVYIGIAVSVG). Residues 535–591 (SCVVRDATGNVNDTITTELTNCTSAACKLNFDFSYCESNTCSYGLMNNFQVMSMVSG) lie on the Extracellular side of the membrane. N546 and N555 each carry an N-linked (GlcNAc...) asparagine glycan. Cystine bridges form between C556–C561 and C570–C575. The helical transmembrane segment at 592–616 (FAPLISAGIFSATLSSALASLVSAP) threads the bilayer. 3 residues coordinate Na(+): A603, S606, and S607. Over 617–644 (KIFQALCKDNIYPAFQMFAKGYGKNNEP) the chain is Cytoplasmic. Helical transmembrane passes span 645 to 665 (LRGYILTFLIALGFILIAELN) and 666 to 684 (VIAPIISNFFLASYALINF). Residues F675 and Y679 each coordinate chloride. Residues 685–707 (SVFHASLAKSPGWRPAFKYYNMW) are Cytoplasmic-facing. 2 consecutive transmembrane segments (helical) span residues 708 to 725 (ISLIGAILCCIVMFVINW) and 726 to 738 (WAALLTYVIVLGL). Topologically, residues 739 to 1205 (YIYVTYKKPD…NHQSVLTFYS (467 aa)) are cytoplasmic. The interval 754-771 (STQALTYLSALQHSIRLS) is scissor helix. S933 and S937 each carry phosphoserine. The tract at residues 953-986 (SDQDTCKSSGEKSITQKDEEEDGKTPTQPLLKKE) is disordered. At S987 the chain carries Phosphoserine.

Belongs to the SLC12A transporter family. As to quaternary structure, homodimer; adopts a domain-swap conformation at the scissor helices connecting the transmembrane domain and C-terminal domain. Post-translationally, phosphorylated at Thr-196, Thr-200 and Thr-205 by OXSR1/OSR1 and STK39/SPAK downstream of WNK kinases (WNK1, WNK2, WNK3 or WNK4), promoting its activity. As to expression, widely expressed. High expression found in the cochlea, cochlear lateral wall, and the choroid plexus. Lower expression found in the cerebellum and the cortex.

It is found in the basolateral cell membrane. The enzyme catalyses K(+)(out) + 2 chloride(out) + Na(+)(out) = K(+)(in) + 2 chloride(in) + Na(+)(in). Its activity is regulated as follows. Activated following phosphorylation by OXSR1/OSR1 and STK39/SPAK downstream of WNK kinases (WNK1, WNK2, WNK3 or WNK4). Inhibited by bumetanide and furosemide. Cation-chloride cotransporter which mediates the electroneutral transport of chloride, potassium and/or sodium ions across the membrane. Plays a vital role in the regulation of ionic balance and cell volume. The sequence is that of Solute carrier family 12 member 2 (Slc12a2) from Mus musculus (Mouse).